The following is a 175-amino-acid chain: Large ribosomal subunit protein bL17 (175 aa).

The segment at 127 to 175 (GEAEAATKRAVKEDALKKDEAPAAESVEDAKPAEDAPAAEAADDKGKDA) is disordered. Residues 131–147 (AATKRAVKEDALKKDEA) show a composition bias toward basic and acidic residues.

This sequence belongs to the bacterial ribosomal protein bL17 family. In terms of assembly, part of the 50S ribosomal subunit. Contacts protein L32.

This is Large ribosomal subunit protein bL17 from Streptomyces griseus subsp. griseus (strain JCM 4626 / CBS 651.72 / NBRC 13350 / KCC S-0626 / ISP 5235).